The following is a 529-amino-acid chain: Peptide chain release factor 3 (529 aa).

Residues 11 to 280 (SKRRTFAIIS…GLTEWAPAPK (270 aa)) form the tr-type G domain. GTP-binding positions include 20-27 (SHPDAGKT), 88-92 (DTPGH), and 142-145 (NKLD).

This sequence belongs to the TRAFAC class translation factor GTPase superfamily. Classic translation factor GTPase family. PrfC subfamily.

It localises to the cytoplasm. Functionally, increases the formation of ribosomal termination complexes and stimulates activities of RF-1 and RF-2. It binds guanine nucleotides and has strong preference for UGA stop codons. It may interact directly with the ribosome. The stimulation of RF-1 and RF-2 is significantly reduced by GTP and GDP, but not by GMP. This is Peptide chain release factor 3 from Vibrio campbellii (strain ATCC BAA-1116).